The following is a 682-amino-acid chain: Potassium-transporting ATPase ATP-binding subunit (682 aa).

4 helical membrane-spanning segments follow: residues Pro34 to Ala54, Ala62 to Ala82, Ile219 to Leu239, and Val254 to Ile274. Residue Asp307 is the 4-aspartylphosphate intermediate of the active site. Residues Asp344, Glu348, Phe377–Ser384, and Lys395 each bind ATP. Residues Asp518 and Asp522 each coordinate Mg(2+). A run of 3 helical transmembrane segments spans residues Phe588–Met608, Ala616–Leu636, and Ile656–Leu676.

The protein belongs to the cation transport ATPase (P-type) (TC 3.A.3) family. Type IA subfamily. In terms of assembly, the system is composed of three essential subunits: KdpA, KdpB and KdpC.

It is found in the cell inner membrane. The catalysed reaction is K(+)(out) + ATP + H2O = K(+)(in) + ADP + phosphate + H(+). Functionally, part of the high-affinity ATP-driven potassium transport (or Kdp) system, which catalyzes the hydrolysis of ATP coupled with the electrogenic transport of potassium into the cytoplasm. This subunit is responsible for energy coupling to the transport system and for the release of the potassium ions to the cytoplasm. The polypeptide is Potassium-transporting ATPase ATP-binding subunit (Shigella sonnei (strain Ss046)).